The primary structure comprises 143 residues: MAKKIVGYIKLQVPAGKANPSPPIGPALGQRGLNIMEFCKAFNAQTQGVEPGLPIPVVITAYADKSFTFIMKTPPATILIKKAAGVQKGSPKPHTDKVGKLNRTQLEEIAKTKQPDLTAADMDAAVRTIAGSARSMGIEVEGV.

The protein belongs to the universal ribosomal protein uL11 family. Part of the ribosomal stalk of the 50S ribosomal subunit. Interacts with L10 and the large rRNA to form the base of the stalk. L10 forms an elongated spine to which L12 dimers bind in a sequential fashion forming a multimeric L10(L12)X complex. Post-translationally, one or more lysine residues are methylated.

Forms part of the ribosomal stalk which helps the ribosome interact with GTP-bound translation factors. This Laribacter hongkongensis (strain HLHK9) protein is Large ribosomal subunit protein uL11.